We begin with the raw amino-acid sequence, 1130 residues long: BTB/POZ domain-containing protein 7 (1130 aa).

Over residues 1–10 (MGANASNYPH) the composition is skewed to polar residues. The disordered stretch occupies residues 1-24 (MGANASNYPHSCSPRVGGNSQAQQ). The N-myristoyl glycine moiety is linked to residue glycine 2. BTB domains follow at residues 142–211 (TDVD…GMED) and 247–341 (YDVV…DLSV). In terms of domain architecture, BACK spans 413 to 479 (YGSKWVHRQA…WGEHQLMKRI (67 aa)). At serine 722 the chain carries Phosphoserine. 2 disordered regions span residues 898–1050 (SEAG…PAHV) and 1062–1130 (FGLT…KSAL). 2 stretches are compositionally biased toward basic and acidic residues: residues 923–935 (PTLE…RENQ) and 996–1005 (KKQEDPRREY). Serine 1008 carries the phosphoserine modification. Polar residues predominate over residues 1063-1075 (GLTSNRPPSHSAC). Composition is skewed to basic and acidic residues over residues 1080 to 1090 (LEERSSRRLTD) and 1101 to 1112 (RNADLERGDSIS).

As to expression, specifically expressed in embryonic epithelia.

The protein localises to the nucleus. Acts as a mediator of epithelial dynamics and organ branching by promoting cleft progression. Induced following accumulation of fibronectin in forming clefts, leading to local expression of the cell-scattering SNAIL2 and suppression of E-cadherin levels, thereby altering cell morphology and reducing cell-cell adhesion. This stimulates cell separation at the base of forming clefts by local, dynamic intercellular gap formation and promotes cleft progression. The polypeptide is BTB/POZ domain-containing protein 7 (Btbd7) (Mus musculus (Mouse)).